The following is an 84-amino-acid chain: UPF0473 protein CPF_2030 (84 aa).

This sequence belongs to the UPF0473 family.

The chain is UPF0473 protein CPF_2030 from Clostridium perfringens (strain ATCC 13124 / DSM 756 / JCM 1290 / NCIMB 6125 / NCTC 8237 / Type A).